A 126-amino-acid chain; its full sequence is Fluoride-specific ion channel FluC 1 (126 aa).

A run of 4 helical transmembrane segments spans residues 1–21, 38–58, 67–87, and 99–119; these read MAGS…GAWL, WGTF…LALY, LALL…TFAV, and FVSL…AGVG. Na(+) contacts are provided by glycine 77 and serine 80.

Belongs to the fluoride channel Fluc/FEX (TC 1.A.43) family.

The protein resides in the cell inner membrane. The enzyme catalyses fluoride(in) = fluoride(out). With respect to regulation, na(+) is not transported, but it plays an essential structural role and its presence is essential for fluoride channel function. In terms of biological role, fluoride-specific ion channel. Important for reducing fluoride concentration in the cell, thus reducing its toxicity. This chain is Fluoride-specific ion channel FluC 1, found in Synechococcus sp. (strain CC9902).